A 279-amino-acid polypeptide reads, in one-letter code: uncharacterized protein (279 aa).

3 helical membrane-spanning segments follow: residues 31–51 (GYIA…FHAT), 67–87 (LLSI…AKII), and 115–135 (EITG…SLAL).

It belongs to the transketolase family. Thiamine diphosphate is required as a cofactor.

It is found in the cell membrane. This is an uncharacterized protein from Sinorhizobium fredii (strain NBRC 101917 / NGR234).